A 298-amino-acid polypeptide reads, in one-letter code: Zinc finger protein-like 1 homolog (298 aa).

Residues 1–43 (MGLCKCPKRLVTNQFCFEHRVNVCEHCMVQSHPKCIVQSYLQW) form a B box-type; degenerate zinc finger. The RING-type; atypical zinc-finger motif lies at 53-101 (CTLCGTTLEQGDCVRLVCYHVFHWDCLNARQAALPANTAPRGHQCPACT). The segment at 199-230 (AGDYASSRRPLLPRQSPIGGTDRDDNKYQRRT) is disordered. Ser-214 carries the post-translational modification Phosphoserine. A helical membrane pass occupies residues 255–275 (WFLVTAGILAFVLFVYLMAWL).

The protein belongs to the ZFPL1 family.

The protein localises to the membrane. This is Zinc finger protein-like 1 homolog from Drosophila erecta (Fruit fly).